The chain runs to 356 residues: DNA polymerase IV (356 aa).

Positions 7-188 (IIHIDMDCFY…LPLKKISGVG (182 aa)) constitute a UmuC domain. Mg(2+)-binding residues include aspartate 11 and aspartate 106. Glutamate 107 is a catalytic residue.

This sequence belongs to the DNA polymerase type-Y family. As to quaternary structure, monomer. The cofactor is Mg(2+).

It localises to the cytoplasm. It carries out the reaction DNA(n) + a 2'-deoxyribonucleoside 5'-triphosphate = DNA(n+1) + diphosphate. Its function is as follows. Poorly processive, error-prone DNA polymerase involved in untargeted mutagenesis. Copies undamaged DNA at stalled replication forks, which arise in vivo from mismatched or misaligned primer ends. These misaligned primers can be extended by PolIV. Exhibits no 3'-5' exonuclease (proofreading) activity. May be involved in translesional synthesis, in conjunction with the beta clamp from PolIII. The sequence is that of DNA polymerase IV from Glaesserella parasuis serovar 5 (strain SH0165) (Haemophilus parasuis).